The chain runs to 528 residues: Light-independent protochlorophyllide reductase subunit B (528 aa).

Asp-36 contacts [4Fe-4S] cluster. The active-site Proton donor is Asp-274. 409–410 (GL) is a binding site for substrate. The segment at 429–471 (GPSHHGGHAPKPMHDAPAASAAAGAEASMAEETAAPSQDAPAA) is disordered. The segment covering 444 to 465 (APAASAAAGAEASMAEETAAPS) has biased composition (low complexity).

This sequence belongs to the ChlB/BchB/BchZ family. Protochlorophyllide reductase is composed of three subunits; BchL, BchN and BchB. Forms a heterotetramer of two BchB and two BchN subunits. [4Fe-4S] cluster serves as cofactor.

It catalyses the reaction chlorophyllide a + oxidized 2[4Fe-4S]-[ferredoxin] + 2 ADP + 2 phosphate = protochlorophyllide a + reduced 2[4Fe-4S]-[ferredoxin] + 2 ATP + 2 H2O. Its pathway is porphyrin-containing compound metabolism; bacteriochlorophyll biosynthesis (light-independent). Functionally, component of the dark-operative protochlorophyllide reductase (DPOR) that uses Mg-ATP and reduced ferredoxin to reduce ring D of protochlorophyllide (Pchlide) to form chlorophyllide a (Chlide). This reaction is light-independent. The NB-protein (BchN-BchB) is the catalytic component of the complex. The chain is Light-independent protochlorophyllide reductase subunit B from Dinoroseobacter shibae (strain DSM 16493 / NCIMB 14021 / DFL 12).